Consider the following 80-residue polypeptide: Protein FAM229B (80 aa).

Positions 1 to 45 (MPFRFGTQPRRFPVEGGDSSIELESGLSSSASCTGKETSPNRQLR) are disordered. The span at 15–32 (EGGDSSIELESGLSSSAS) shows a compositional bias: low complexity. Over residues 33–42 (CTGKETSPNR) the composition is skewed to polar residues.

The protein belongs to the FAM229 family.

The protein is Protein FAM229B (Fam229b) of Mus musculus (Mouse).